A 260-amino-acid polypeptide reads, in one-letter code: Small ribosomal subunit protein uS3 (260 aa).

The KH type-2 domain maps to L39 to Q114. The segment at Q218 to G260 is disordered. 2 stretches are compositionally biased toward basic and acidic residues: residues P227–R243 and Q251–G260.

This sequence belongs to the universal ribosomal protein uS3 family. As to quaternary structure, part of the 30S ribosomal subunit. Forms a tight complex with proteins S10 and S14.

Its function is as follows. Binds the lower part of the 30S subunit head. Binds mRNA in the 70S ribosome, positioning it for translation. The sequence is that of Small ribosomal subunit protein uS3 from Nostoc sp. (strain PCC 7120 / SAG 25.82 / UTEX 2576).